The sequence spans 160 residues: Probable dihydroneopterin aldolase 3 (160 aa).

Substrate-binding positions include Glu59, Phe91, and 110-111 (YE). Lys137 functions as the Proton donor/acceptor in the catalytic mechanism.

The protein belongs to the DHNA family. As to quaternary structure, homooctamer. Forms a hollow cylinder assembled from two ring-shaped tetramers. As to expression, expressed at very low levels in siliques.

The enzyme catalyses 7,8-dihydroneopterin = 6-hydroxymethyl-7,8-dihydropterin + glycolaldehyde. The protein operates within cofactor biosynthesis; tetrahydrofolate biosynthesis; 2-amino-4-hydroxy-6-hydroxymethyl-7,8-dihydropteridine diphosphate from 7,8-dihydroneopterin triphosphate: step 3/4. Functionally, catalyzes the conversion of 7,8-dihydroneopterin into 6-hydroxymethyl-7,8-dihydropterin, a biosynthetic precursor of the vitamin tetrahydrofolate. Can use L-threo-dihydroneopterin and D-erythro-dihydroneopterin as substrates for the formation of 6-hydroxymethyldihydropterin, but it can also catalyze the epimerization of carbon 2' of dihydroneopterin and dihydromonapterin. The sequence is that of Probable dihydroneopterin aldolase 3 from Arabidopsis thaliana (Mouse-ear cress).